We begin with the raw amino-acid sequence, 286 residues long: Ferric acinetobactin reductase (286 aa).

An FAD-binding FR-type domain is found at 25–131 (MEQLEMTIVS…IGPRPHFIPN (107 aa)). Arg-79, Val-80, Thr-82, Asp-96, Val-98, His-100, Asp-102, Ser-104, Ala-106, Arg-250, Gly-252, and Ser-255 together coordinate FAD.

Belongs to the SIP oxidoreductase family. Monomer in solution. The cofactor is FAD.

It carries out the reaction 2 a Fe(II)-siderophore + NAD(+) + H(+) = 2 a Fe(III)-siderophore + NADH. The catalysed reaction is 2 a Fe(II)-siderophore + NADP(+) + H(+) = 2 a Fe(III)-siderophore + NADPH. In terms of biological role, ferric-siderophore reductase involved in iron removal from the siderophores after their transport into the cell. Interacts with the siderophores acinetobactin (Acb) and preacinetobactin (pre-Acb) and catalyzes the reduction of the ferric iron bound to the siderophores to ferrous iron, resulting in destabilization of the siderophore chelation complex and entrance of ferrous iron into the intracellular pool of bioavailable metals. Can use NADH and NADPH as electron donors in vitro, but the reduction rate is very slow, suggesting that NADH and NADPH are not the physiological partners of BauF. This chain is Ferric acinetobactin reductase, found in Acinetobacter baumannii.